The chain runs to 199 residues: dITP/XTP pyrophosphatase (199 aa).

8–13 (SGNAGK) contributes to the substrate binding site. The active-site Proton acceptor is aspartate 69. Mg(2+) is bound at residue aspartate 69. Substrate-binding positions include serine 70, 154 to 157 (FGYN), lysine 177, and 182 to 183 (HR).

It belongs to the HAM1 NTPase family. Homodimer. It depends on Mg(2+) as a cofactor.

The enzyme catalyses XTP + H2O = XMP + diphosphate + H(+). It carries out the reaction dITP + H2O = dIMP + diphosphate + H(+). It catalyses the reaction ITP + H2O = IMP + diphosphate + H(+). In terms of biological role, pyrophosphatase that catalyzes the hydrolysis of nucleoside triphosphates to their monophosphate derivatives, with a high preference for the non-canonical purine nucleotides XTP (xanthosine triphosphate), dITP (deoxyinosine triphosphate) and ITP. Seems to function as a house-cleaning enzyme that removes non-canonical purine nucleotides from the nucleotide pool, thus preventing their incorporation into DNA/RNA and avoiding chromosomal lesions. The chain is dITP/XTP pyrophosphatase from Xanthomonas oryzae pv. oryzae (strain KACC10331 / KXO85).